The chain runs to 404 residues: Protrudin (404 aa).

The tract at residues 1 to 20 (MQTSEREGCGPEVSPSTVPE) is disordered. At 1-66 (MQTSEREGCG…AGDGVRYLLR (66 aa)) the chain is on the cytoplasmic side. The interval 1–92 (MQTSEREGCG…LFLTLNEGAW (92 aa)) is sufficient for homooligomerization. The segment at 1 to 205 (MQTSEREGCG…LYLLPLCWVL (205 aa)) is sufficient for localization to endoplasmic reticulum tubular network and for interactions with REEP1, REEP5, ATL1, ATL2, ATL3 and SPAST. The necessary for interaction with RAB11A and function in neurite outgrowth stretch occupies residues 51–64 (LEPLKDAGDGVRYL). Residues 67 to 87 (WQTPLCSLLTCLGLNVLFLTL) form a helical membrane-spanning segment. A topological domain (lumenal) is located at residue Asn-88. Residues 89 to 109 (EGAWYSVGALMISVPALLGYL) traverse the membrane as a helical segment. Residues 110–187 (QEGCQARLSE…NPAVSSQFYG (78 aa)) are Cytoplasmic-facing. The helical intramembrane region spans 188–208 (ALLGTVCMLYLLPLCWVLALL). The Cytoplasmic portion of the chain corresponds to 209 to 404 (NSTLFLGNVE…CASCNQTLSK (196 aa)). Residues 234 to 286 (MNPKQEESAFESPPPSDAGGKGALVDCTPAPTPTEDLTPGSVEEAEEAEPDEE) form a disordered region. The segment at 271-354 (TPGSVEEAEE…GCSATFSVLK (84 aa)) is necessary for interaction with KIF5A. Over residues 276–286 (EEAEEAEPDEE) the composition is skewed to acidic residues. The necessary for interaction with VAPA stretch occupies residues 286 to 292 (EFKDAIE). The FYVE-type zinc finger occupies 337-403 (TNNYGSCTGC…VCASCNQTLS (67 aa)). Cys-343, Cys-346, Cys-359, Cys-362, Cys-367, Cys-370, Cys-395, and Cys-398 together coordinate Zn(2+).

Can form homooligomers (monomers, dimers and tetramers). Interacts with RAB11A (GDP-bound form); regulates RAB11A. Interacts with FKBP8; may negatively regulate ZFYVE27 phosphorylation. Interacts with VAPA (via MSP domain); may regulate ZFYVE27 retention in the endoplasmic reticulum and its function in cell projections formation. Interacts with VAPB (via MSP domain). Interacts with RAB11B (GDP-bound form), REEP1, REEP5, ATL1, ATL2, ATL3, SPAST, SURF4, KIF5A, KIF5B, KIF5C and RTN3. In terms of processing, phosphorylated. Phosphorylation is induced by NGF through the MAPK/ERK pathway and modulates interaction with RAB11A.

It is found in the recycling endosome membrane. The protein localises to the endoplasmic reticulum membrane. Its subcellular location is the cell projection. The protein resides in the growth cone membrane. Functionally, key regulator of RAB11-dependent vesicular trafficking during neurite extension through polarized membrane transport. Promotes axonal elongation and contributes to the establishment of neuronal cell polarity. Involved in nerve growth factor-induced neurite formation in VAPA-dependent manner. Contributes to both the formation and stabilization of the tubular ER network. Involved in ER morphogenesis by regulating the sheet-to-tubule balance and possibly the density of tubule interconnections. Acts as an adapter protein that facilitates the interaction of KIF5A with VAPA, VAPB, SURF4, RAB11A, RAB11B and RTN3 and the ZFYVE27-KIF5A complex contributes to the transport of these proteins in neurons. Can induce formation of neurite-like membrane protrusions in non-neuronal cells in a KIF5A/B-dependent manner. The polypeptide is Protrudin (ZFYVE27) (Bos taurus (Bovine)).